The primary structure comprises 159 residues: SsrA-binding protein (159 aa).

Belongs to the SmpB family.

It localises to the cytoplasm. Its function is as follows. Required for rescue of stalled ribosomes mediated by trans-translation. Binds to transfer-messenger RNA (tmRNA), required for stable association of tmRNA with ribosomes. tmRNA and SmpB together mimic tRNA shape, replacing the anticodon stem-loop with SmpB. tmRNA is encoded by the ssrA gene; the 2 termini fold to resemble tRNA(Ala) and it encodes a 'tag peptide', a short internal open reading frame. During trans-translation Ala-aminoacylated tmRNA acts like a tRNA, entering the A-site of stalled ribosomes, displacing the stalled mRNA. The ribosome then switches to translate the ORF on the tmRNA; the nascent peptide is terminated with the 'tag peptide' encoded by the tmRNA and targeted for degradation. The ribosome is freed to recommence translation, which seems to be the essential function of trans-translation. This Coxiella burnetii (strain CbuG_Q212) (Coxiella burnetii (strain Q212)) protein is SsrA-binding protein.